We begin with the raw amino-acid sequence, 489 residues long: UDP-N-acetylmuramoyl-L-alanyl-D-glutamate--2,6-diaminopimelate ligase (489 aa).

Ser30 contacts UDP-N-acetyl-alpha-D-muramoyl-L-alanyl-D-glutamate. 108-114 (GTNGKTT) contacts ATP. Residues Asn149, 150–151 (TT), Ser177, Gln183, and Arg185 each bind UDP-N-acetyl-alpha-D-muramoyl-L-alanyl-D-glutamate. N6-carboxylysine is present on Lys217. Residues Arg383, 407 to 410 (DNPR), Gly459, and Glu463 each bind meso-2,6-diaminopimelate. The short motif at 407-410 (DNPR) is the Meso-diaminopimelate recognition motif element.

The protein belongs to the MurCDEF family. MurE subfamily. It depends on Mg(2+) as a cofactor. Post-translationally, carboxylation is probably crucial for Mg(2+) binding and, consequently, for the gamma-phosphate positioning of ATP.

It localises to the cytoplasm. The enzyme catalyses UDP-N-acetyl-alpha-D-muramoyl-L-alanyl-D-glutamate + meso-2,6-diaminopimelate + ATP = UDP-N-acetyl-alpha-D-muramoyl-L-alanyl-gamma-D-glutamyl-meso-2,6-diaminopimelate + ADP + phosphate + H(+). It participates in cell wall biogenesis; peptidoglycan biosynthesis. Functionally, catalyzes the addition of meso-diaminopimelic acid to the nucleotide precursor UDP-N-acetylmuramoyl-L-alanyl-D-glutamate (UMAG) in the biosynthesis of bacterial cell-wall peptidoglycan. In Geobacillus thermodenitrificans (strain NG80-2), this protein is UDP-N-acetylmuramoyl-L-alanyl-D-glutamate--2,6-diaminopimelate ligase.